Here is a 687-residue protein sequence, read N- to C-terminus: Glycine--tRNA ligase beta subunit (687 aa).

Belongs to the class-II aminoacyl-tRNA synthetase family. Tetramer of two alpha and two beta subunits.

Its subcellular location is the cytoplasm. It carries out the reaction tRNA(Gly) + glycine + ATP = glycyl-tRNA(Gly) + AMP + diphosphate. This chain is Glycine--tRNA ligase beta subunit, found in Neisseria gonorrhoeae (strain ATCC 700825 / FA 1090).